We begin with the raw amino-acid sequence, 303 residues long: Protoheme IX farnesyltransferase (303 aa).

8 helical membrane-spanning segments follow: residues 25-45, 54-74, 104-124, 125-145, 151-171, 179-199, 228-248, and 280-300; these read MGLVQGNLIPAFAGSWLAIVL, IPQILLMLIGSTLIMGGACAL, LLILSFGMMVIGEIALFILNI, PSGVIGLMGIIGYVSFYSIWS, WNTVIGAFPGAVPPVIGWTAI, AIALFLVIFCWQPIHFYALAI, VWLILLLPLPFLLSDLGPVFI, and FVYSLNYLVLFFALVVIISLI.

It belongs to the UbiA prenyltransferase family. Protoheme IX farnesyltransferase subfamily. Interacts with CtaA.

It localises to the cell membrane. The enzyme catalyses heme b + (2E,6E)-farnesyl diphosphate + H2O = Fe(II)-heme o + diphosphate. Its pathway is porphyrin-containing compound metabolism; heme O biosynthesis; heme O from protoheme: step 1/1. Functionally, converts heme B (protoheme IX) to heme O by substitution of the vinyl group on carbon 2 of heme B porphyrin ring with a hydroxyethyl farnesyl side group. The sequence is that of Protoheme IX farnesyltransferase from Staphylococcus carnosus (strain TM300).